We begin with the raw amino-acid sequence, 123 residues long: Preprofallaxidin-3 (123 aa).

Positions 1 to 22 (MASLKKSLFLVLFLGLVSLSIC) are cleaved as a signal peptide. Positions 23-46 (EEKKRENEDDAEDENHEEESEEKR) are excised as a propeptide. Residues 26-46 (KRENEDDAEDENHEEESEEKR) are disordered. Over residues 30–42 (EDDAEDENHEEES) the composition is skewed to acidic residues. At L62 the chain carries Leucine amide. Residues 66–70 (SEEKR) constitute a propeptide that is removed on maturation. F74 carries the post-translational modification Phenylalanine amide. Residues 78–82 (SEEKR) constitute a propeptide that is removed on maturation. F88 is subject to Phenylalanine amide. A propeptide spanning residues 92-96 (SEEKR) is cleaved from the precursor. I102 is modified (isoleucine amide). Residues 106–110 (SEEKR) constitute a propeptide that is removed on maturation. I116 carries the isoleucine amide modification. A propeptide spanning residues 120–123 (KKKK) is cleaved from the precursor.

Belongs to the frog skin active peptide (FSAP) family. Brevinin subfamily. As to expression, expressed by the skin glands.

It localises to the secreted. Fallaxidin-1.1 shows no antibacterial activity against Gram-positive or Gram-negative bacteria. Does not inhibit the formation of NO by neuronal nitric oxide synthase. Has no effect on splenocyte proliferation or smooth muscle contraction. In terms of biological role, fallaxidin-1.2 shows no antibacterial activity against Gram-positive or Gram-negative bacteria. Does not inhibit the formation of NO by neuronal nitric oxide synthase. Has no effect on splenocyte proliferation or smooth muscle contraction. Functionally, fallaxidin-1.3 shows no antibacterial activity against Gram-positive or Gram-negative bacteria. Does not inhibit the formation of NO by neuronal nitric oxide synthase. Has no effect on splenocyte proliferation or smooth muscle contraction. Its function is as follows. Fallaxidin-3.2 shows antibacterial activity against the Gram-positive bacteria E.faecalis (MIC=100 uM) and L.lactis (MIC=500 uM). No antibacterial activity against the Gram-positive bacteria B.cereus, L.innocua, M.luteus, S.epidermidis, S.uberis and S.aureus, or the Gram-negative bacteria E.cloacae and E.coli. This chain is Preprofallaxidin-3, found in Litoria fallax (Eastern dwarf tree frog).